The sequence spans 419 residues: Putative Bro-N domain-containing protein 201R (419 aa).

Residues 4 to 136 (LINLKDCKEY…KILPSIRKYG (133 aa)) form the Bro-N domain. Residues 150 to 195 (QLALKDKSEEELQIKLQEERIEKENAYMKLRSEAKRHKEQIKRTLE) are a coiled coil.

This sequence belongs to the IIV-6 201R/289L family.

This chain is Putative Bro-N domain-containing protein 201R, found in Acheta domesticus (House cricket).